Reading from the N-terminus, the 330-residue chain is Ketol-acid reductoisomerase (NADP(+)) (330 aa).

The region spanning 3–184 (LPVYYDKDID…GGGRMGVLET (182 aa)) is the KARI N-terminal Rossmann domain. NADP(+) contacts are provided by residues 26–29 (YGAQ), Ser-52, and Ser-54. His-109 is an active-site residue. An NADP(+)-binding site is contributed by Gly-135. Residues 185-329 (SFKEECESDL…EILRAPFNHK (145 aa)) form the KARI C-terminal knotted domain. Mg(2+) is bound by residues Asp-193, Glu-197, Glu-229, and Glu-233. Residue Ser-254 participates in substrate binding.

It belongs to the ketol-acid reductoisomerase family. The cofactor is Mg(2+).

It catalyses the reaction (2R)-2,3-dihydroxy-3-methylbutanoate + NADP(+) = (2S)-2-acetolactate + NADPH + H(+). The enzyme catalyses (2R,3R)-2,3-dihydroxy-3-methylpentanoate + NADP(+) = (S)-2-ethyl-2-hydroxy-3-oxobutanoate + NADPH + H(+). It functions in the pathway amino-acid biosynthesis; L-isoleucine biosynthesis; L-isoleucine from 2-oxobutanoate: step 2/4. It participates in amino-acid biosynthesis; L-valine biosynthesis; L-valine from pyruvate: step 2/4. Involved in the biosynthesis of branched-chain amino acids (BCAA). Catalyzes an alkyl-migration followed by a ketol-acid reduction of (S)-2-acetolactate (S2AL) to yield (R)-2,3-dihydroxy-isovalerate. In the isomerase reaction, S2AL is rearranged via a Mg-dependent methyl migration to produce 3-hydroxy-3-methyl-2-ketobutyrate (HMKB). In the reductase reaction, this 2-ketoacid undergoes a metal-dependent reduction by NADPH to yield (R)-2,3-dihydroxy-isovalerate. This chain is Ketol-acid reductoisomerase (NADP(+)), found in Helicobacter pylori (strain ATCC 700392 / 26695) (Campylobacter pylori).